We begin with the raw amino-acid sequence, 540 residues long: Chaperonin GroEL 1 (540 aa).

ATP is bound by residues 29 to 32, 86 to 90, glycine 415, 479 to 481, and aspartate 495; these read TIGP, DGTTT, and NAA.

Belongs to the chaperonin (HSP60) family. Forms a cylinder of 14 subunits composed of two heptameric rings stacked back-to-back. Interacts with the co-chaperonin GroES.

It localises to the cytoplasm. It carries out the reaction ATP + H2O + a folded polypeptide = ADP + phosphate + an unfolded polypeptide.. Together with its co-chaperonin GroES, plays an essential role in assisting protein folding. The GroEL-GroES system forms a nano-cage that allows encapsulation of the non-native substrate proteins and provides a physical environment optimized to promote and accelerate protein folding. This chain is Chaperonin GroEL 1, found in Streptomyces albus G.